We begin with the raw amino-acid sequence, 196 residues long: Probable thymidylate kinase (196 aa).

Residue glycine 8 to threonine 15 coordinates ATP.

The protein belongs to the thymidylate kinase family.

The catalysed reaction is dTMP + ATP = dTDP + ADP. The chain is Probable thymidylate kinase from Metallosphaera sedula (strain ATCC 51363 / DSM 5348 / JCM 9185 / NBRC 15509 / TH2).